The following is a 353-amino-acid chain: Vomeronasal type-1 receptor 1 (353 aa).

At 1 to 56 (MVGDTLKLLSPLMTRYFFLLFYSTDSSDLNENQHPLDFDEMAFGKVKSGISFLIQT) the chain is on the extracellular side. A helical transmembrane segment spans residues 57-77 (GVGILGNSFLLCFYNLILFTG). Over 78-84 (HKLRPTD) the chain is Cytoplasmic. Residues 85-105 (LILSQLALANSMVLFFKGIPQ) form a helical membrane-spanning segment. The Extracellular portion of the chain corresponds to 106–132 (TMAAFGLKYLLNDTGCKFVFYYHRVGT). N-linked (GlcNAc...) asparagine glycosylation occurs at N117. The helical transmembrane segment at 133–153 (RVSLSTICLLNGFQAIKLNPS) threads the bilayer. At 154–169 (ICRWMEIKIRSPRFID) the chain is on the cytoplasmic side. A helical membrane pass occupies residues 170-190 (FCCLLCWAPHVLMNASVLLLV). The Extracellular segment spans residues 191-226 (NGPLNSKNSSAKNNYGYCSYKASKRFSSLHAVLYFS). An N-linked (GlcNAc...) asparagine glycan is attached at N198. Residues 227–247 (PDFMSLGFMVWASGSMVFFLY) traverse the membrane as a helical segment. At 248-274 (RHKQQVQHNHSNRLSCRPSQEARATHT) the chain is on the cytoplasmic side. Residues 275–295 (IMVLVSSFFVFYSVHSFLTIW) traverse the membrane as a helical segment. Residues 296 to 303 (TTVVANPG) lie on the Extracellular side of the membrane. A helical membrane pass occupies residues 304-324 (QWIVTNSVLVASCFPARSPFV). The Cytoplasmic segment spans residues 325–353 (LIMSDTHISQFCFACRTRKTLFPNLVVMP).

The protein belongs to the G-protein coupled receptor 1 family. In terms of tissue distribution, expressed in the olfactory mucosa, very low expression in brain, lung and kidney.

It localises to the cell membrane. Functionally, putative pheromone receptor. The polypeptide is Vomeronasal type-1 receptor 1 (VN1R1) (Homo sapiens (Human)).